The chain runs to 176 residues: Thiol-disulfide oxidoreductase ResA (176 aa).

Residues 11 to 30 form a helical; Signal-anchor for type II membrane protein membrane-spanning segment; sequence LSILAVISVALGYTFYSNFF. A Thioredoxin domain is found at 36 to 176; it reads ARAGEQAVNF…EFMELIKPEA (141 aa). A disulfide bond links Cys-74 and Cys-77.

Belongs to the thioredoxin family. ResA subfamily.

It localises to the cell membrane. The protein operates within protein modification; cytochrome c assembly. Its function is as follows. Thiol-disulfide oxidoreductase which is required in disulfide reduction during c-type cytochrome synthesis. May accept reducing equivalents from CcdA, leading to breakage of disulfide bonds in apocytochrome c; following this reduction heme can be covalently attached. The chain is Thiol-disulfide oxidoreductase ResA from Halalkalibacterium halodurans (strain ATCC BAA-125 / DSM 18197 / FERM 7344 / JCM 9153 / C-125) (Bacillus halodurans).